Here is a 189-residue protein sequence, read N- to C-terminus: MKVLSFLIRQDHLLYLDIFAKQNNLTRSDAIRYAISVLDEESTPVSLVGFPGIKLVRTSVKLAENVISRIDRLAILSKITRSDVIRNAIYHLLINNAPKQLPPVTAQTEKKYGYVCPYCVSRFPTVRALKIHLKRRHNGFPWCPVCYKPLKNKNATNHFRRFTDPQHQFWYMISRKRYLSSHRKEAVKQ.

The C2H2-type zinc-finger motif lies at 114 to 137 (YVCPYCVSRFPTVRALKIHLKRRH).

The protein is Putative zinc finger protein ORF189 of Acidianus two-tailed virus (ATV).